The following is a 513-amino-acid chain: MQLNPSEISELIKSRIQGLEASADVRNQGTVISVTDGIVRIHGLSDVMQGEMLEFPGNTFGLALNLERDSVGAVILGEYEHISEGDIVKTTGRILEVPVGPELVGRVVDALGNPIDGKGPVNAKLTDAIEKIAPGVIWRKSVSQPVQTGLKSIDSMVPIGRGQRELIIGDRQCGKTAVAIDTIINQKGKDLICIYVAIGQKASSIMNVVRKLEETGALEYTIVVAASASESAAMQYLAPYAGCTMGEYFRDRGQDALIIYDDLTKQAWAYRQISLLLRRPPGREAYPGDVFYLHSRLLERAARVSEEYVEKFTNGEVKGKSGSLTALPVIETQAGDVTAFVPTNVISITDGQIFLETDLFNAGIRPAINAGVSVSRVGGAAQTKVVKKLSGGIRTDLAQYRELAAFAQFASDLDEATRKQLERGRRVTELLKQPQYQPLQVWELAVSLFSANNGYLDDLDVKDVLPFEKGLREYLKTSHADLIKRIEDTKDLSKDDESALHAALKDFKKSGAY.

Residue Gly169 to Thr176 coordinates ATP.

This sequence belongs to the ATPase alpha/beta chains family. As to quaternary structure, F-type ATPases have 2 components, CF(1) - the catalytic core - and CF(0) - the membrane proton channel. CF(1) has five subunits: alpha(3), beta(3), gamma(1), delta(1), epsilon(1). CF(0) has three main subunits: a(1), b(2) and c(9-12). The alpha and beta chains form an alternating ring which encloses part of the gamma chain. CF(1) is attached to CF(0) by a central stalk formed by the gamma and epsilon chains, while a peripheral stalk is formed by the delta and b chains.

Its subcellular location is the cell inner membrane. The catalysed reaction is ATP + H2O + 4 H(+)(in) = ADP + phosphate + 5 H(+)(out). Its function is as follows. Produces ATP from ADP in the presence of a proton gradient across the membrane. The alpha chain is a regulatory subunit. The sequence is that of ATP synthase subunit alpha 1 from Burkholderia pseudomallei (strain 1710b).